Consider the following 35-residue polypeptide: Cupiennin-1a (35 aa).

The residue at position 35 (glutamate 35) is a Glutamic acid 1-amide.

It belongs to the cationic peptide 04 (cupiennin) family. 01 subfamily. As to quaternary structure, monomer. Interacts with CSTX-1 (AC P81694), CSTX-9 (AC P58604), and CSTX-13 (AC P83919). As to expression, expressed by the venom gland.

It is found in the secreted. Functionally, has antimicrobial activity against B.subtilis, E.coli, E.faecalis, P.denitrificans, P.aeruginosa, P.putida, S.aureus, and S.epidermidis. Shows insecticidal and hemolytic activities. Probably acts by disturbing membrane function with its amphipathic structure. Synergistically increases the insecticidal activity of CSTX-1 (AC P81694), CSTX-9 (AC P58604), and CSTX-13 (AC P83919) by up to 65%. Also inhibits the formation of nitric oxide by neuronal nitric oxide synthase. In Cupiennius salei (American wandering spider), this protein is Cupiennin-1a.